The primary structure comprises 185 residues: Thiol:disulfide interchange protein DsbE (185 aa).

The Cytoplasmic segment spans residues 1–4 (MKRN). A helical membrane pass occupies residues 5–25 (VLLLPLLIFLLIAAALLWQLA). At 26-185 (RNAQGDDPTN…WDRYSREAAQ (160 aa)) the chain is on the periplasmic side. Residues 39-177 (ALTGKPVPAF…WESELKPLWD (139 aa)) enclose the Thioredoxin domain. A disulfide bond links Cys80 and Cys83.

This sequence belongs to the thioredoxin family. DsbE subfamily.

The protein localises to the cell inner membrane. Involved in disulfide bond formation. Catalyzes a late, reductive step in the assembly of periplasmic c-type cytochromes, probably the reduction of disulfide bonds of the apocytochrome c to allow covalent linkage with the heme. Possible subunit of a heme lyase. The protein is Thiol:disulfide interchange protein DsbE (dsbE1) of Salmonella typhimurium (strain LT2 / SGSC1412 / ATCC 700720).